The chain runs to 240 residues: Uridylate kinase (240 aa).

Position 13-16 (13-16) interacts with ATP; that stretch reads KASG. The interval 21–26 is involved in allosteric activation by GTP; sequence GSQGFG. Residue glycine 55 coordinates UMP. ATP-binding residues include glycine 56 and arginine 60. UMP contacts are provided by residues aspartate 75 and 136-143; that span reads TGNPFFTT. ATP contacts are provided by threonine 163, glutamine 164, tyrosine 169, and aspartate 172.

Belongs to the UMP kinase family. Homohexamer.

The protein resides in the cytoplasm. The catalysed reaction is UMP + ATP = UDP + ADP. The protein operates within pyrimidine metabolism; CTP biosynthesis via de novo pathway; UDP from UMP (UMPK route): step 1/1. With respect to regulation, allosterically activated by GTP. Inhibited by UTP. Catalyzes the reversible phosphorylation of UMP to UDP. This Brucella suis biovar 1 (strain 1330) protein is Uridylate kinase.